The primary structure comprises 896 residues: Myelin regulatory factor-like protein (896 aa).

The NDT80 DNA-binding region spans 111–403 (GLPHRTFHNC…SNPGQFENDI (293 aa)). Residues 449–557 (SDSRAKQNVQ…KLTNNLEERI (109 aa)) enclose the Peptidase S74 domain. Residues 541 to 573 (GAVKQLCKLTNNLEERIEELEIWNRKLARLKRL) adopt a coiled-coil conformation. A helical membrane pass occupies residues 622-638 (VFQSLVITLIAVMAFCL). Polar residues predominate over residues 648 to 658 (APSSNLTSSQE). The interval 648–672 (APSSNLTSSQEPALPSTASPSAPNT) is disordered. The segment covering 659–672 (PALPSTASPSAPNT) has biased composition (low complexity).

This sequence belongs to the MRF family.

The protein localises to the membrane. In Bos taurus (Bovine), this protein is Myelin regulatory factor-like protein (MYRFL).